The chain runs to 926 residues: Ubiquitin carboxyl-terminal hydrolase 4 (926 aa).

The Rhodanese domain occupies 205–328; sequence SQMEILLIDI…WLKSNYGRQV (124 aa). Serine 443 carries the post-translational modification Phosphoserine. A USP domain is found at 562 to 923; the sequence is VGLENLGNSC…NAYVLFYHRV (362 aa). Residue cysteine 571 is the Nucleophile of the active site. The Proton acceptor role is filled by histidine 880.

It belongs to the peptidase C19 family. Interacts with BRO1, RFU1 and VPS32. Associates with the 26S proteasome.

Its subcellular location is the cytoplasm. The protein localises to the late endosome membrane. The enzyme catalyses Thiol-dependent hydrolysis of ester, thioester, amide, peptide and isopeptide bonds formed by the C-terminal Gly of ubiquitin (a 76-residue protein attached to proteins as an intracellular targeting signal).. With respect to regulation, RFU1 is an inhibitor of deubiquitination activity. Functionally, ubiquitin thioesterase that acts at the late endosome/prevacuolar compartment to recover ubiquitin from ubiquitinated membrane proteins en route to the vacuole. Also removes ubiquitin from soluble proteins targeted to proteasomes. Is essential to maintain a normal level of free ubiquitin. Involved in the ammonium-induced down-regulation of the GAP1 permease and the UME3 destruction in response to oxidative stress. Has a role in the RAD9 checkpoint response to TOP1 poisons. Required for promoting coordination of DNA replication and avoids DNA overreplication. In Saccharomyces cerevisiae (strain ATCC 204508 / S288c) (Baker's yeast), this protein is Ubiquitin carboxyl-terminal hydrolase 4 (DOA4).